The following is an 846-amino-acid chain: Iron-sulfur cluster assembly SufBD family protein Mb1496 (846 aa).

A disordered region spans residues 1 to 20 (MTLTPEASKSVAQPPTQAPL). The DOD-type homing endonuclease domain occupies 388–528 (LAGYYLAEGH…LQSILARLGH (141 aa)).

This sequence belongs to the iron-sulfur cluster assembly SufBD family. In terms of processing, this protein undergoes a protein self splicing that involves a post-translational excision of the intervening region (intein) followed by peptide ligation.

The polypeptide is Iron-sulfur cluster assembly SufBD family protein Mb1496 (Mycobacterium bovis (strain ATCC BAA-935 / AF2122/97)).